Reading from the N-terminus, the 387-residue chain is MSSGKRRNPLGLSLPPTVNEQSESGEATAEEATATVPLEEQLKKLGLTEPQTQRLSEFLQVKEGIKELSEDMLQTEGELGHGNGGVVNKCVHRKTGVIMARKLVHLEIKPSVRQQIVKELAVLHKCNSPFIVGFYGAFVDNNDISICMEYMDGLSLDIVLKKVGRLPEKFVGRISVAVVRGLTYLKDEIKILHRDVKPSNMLVNSNGEIKLCDFGVSGMLIDSMANSFVGTRSYMAPERLTGSHYTISSDIWSFGLSLVELLIGRYPVPAPSQAEYATMFNVAENEIELADSLEEPNYHPPSNPASMAIFEMLDYIVNGPPPTLPKRFFTDEVIGFVSKCLRKLPSERATLKSLTADVFFTQYADHDDQGEFAVFVKGTINLPKLNP.

The interval 1–37 is disordered; the sequence is MSSGKRRNPLGLSLPPTVNEQSESGEATAEEATATVP. Over residues 16-25 the composition is skewed to polar residues; that stretch reads PTVNEQSESG. Low complexity predominate over residues 26–35; the sequence is EATAEEATAT. Residues 73–360 enclose the Protein kinase domain; that stretch reads LQTEGELGHG…LKSLTADVFF (288 aa). ATP contacts are provided by residues 79-87 and lysine 102; that span reads LGHGNGGVV. The active-site Proton acceptor is aspartate 195. Phosphoserine occurs at positions 223 and 227.

It belongs to the protein kinase superfamily. STE Ser/Thr protein kinase family. MAP kinase kinase subfamily. As to quaternary structure, interacts with ksr-1.

The catalysed reaction is L-seryl-[protein] + ATP = O-phospho-L-seryl-[protein] + ADP + H(+). It carries out the reaction L-threonyl-[protein] + ATP = O-phospho-L-threonyl-[protein] + ADP + H(+). It catalyses the reaction L-tyrosyl-[protein] + ATP = O-phospho-L-tyrosyl-[protein] + ADP + H(+). With respect to regulation, activated by tyrosine and threonine phosphorylation catalyzed by MAP kinase kinase kinases. Its function is as follows. Functions in the let-60 Ras signaling pathway; acts downstream of lin-45 raf kinase, but before the sur-1/mpk-1 gene product in controlling vulval cell differentiation. Required for progression of developing oocytes through the pachytene stage. Plays a role in responses to M.nematophilum-mediated bacterial infection by promoting tail swelling and preventing constipation. Involved in fluid homeostasis. Positively regulates lifespan upstream of mpk-1. The sequence is that of Dual specificity mitogen-activated protein kinase kinase mek-2 (mek-2) from Caenorhabditis elegans.